The chain runs to 300 residues: Ribosomal RNA small subunit methyltransferase H (300 aa).

Residues 33–35 (GGH), D52, F79, D100, and Q107 contribute to the S-adenosyl-L-methionine site.

Belongs to the methyltransferase superfamily. RsmH family.

The protein resides in the cytoplasm. It carries out the reaction cytidine(1402) in 16S rRNA + S-adenosyl-L-methionine = N(4)-methylcytidine(1402) in 16S rRNA + S-adenosyl-L-homocysteine + H(+). In terms of biological role, specifically methylates the N4 position of cytidine in position 1402 (C1402) of 16S rRNA. The chain is Ribosomal RNA small subunit methyltransferase H from Mycoplasmopsis agalactiae (strain NCTC 10123 / CIP 59.7 / PG2) (Mycoplasma agalactiae).